A 151-amino-acid polypeptide reads, in one-letter code: MKLILTAEVEHLGAAGDTVEVKDGYGRNYLLPRGLAIVASRGAERQAEEIRRARESKVIRDIEHANELKTALEGLGDVTLSVNAAGDTGKLFGSVTAADVVNAIKKAGGPNLDKRTVQLAKAHIKSVGTHPVTVKLHTGVEAKVSLNVVAQ.

The protein belongs to the bacterial ribosomal protein bL9 family.

Binds to the 23S rRNA. The protein is Large ribosomal subunit protein bL9 of Mycolicibacterium smegmatis (strain ATCC 700084 / mc(2)155) (Mycobacterium smegmatis).